A 118-amino-acid polypeptide reads, in one-letter code: Large ribosomal subunit protein uL18 (118 aa).

Residues 1 to 24 (MITKPDKNKIRQKRHRRVRGKLSG) are disordered. Residues 10 to 20 (IRQKRHRRVRG) are compositionally biased toward basic residues.

Belongs to the universal ribosomal protein uL18 family. As to quaternary structure, part of the 50S ribosomal subunit; part of the 5S rRNA/L5/L18/L25 subcomplex. Contacts the 5S and 23S rRNAs.

This is one of the proteins that bind and probably mediate the attachment of the 5S RNA into the large ribosomal subunit, where it forms part of the central protuberance. This is Large ribosomal subunit protein uL18 from Streptococcus sanguinis (strain SK36).